The chain runs to 208 residues: Uracil phosphoribosyltransferase (208 aa).

5-phospho-alpha-D-ribose 1-diphosphate contacts are provided by residues arginine 78, arginine 103, and 130–138 (DPMFATGGT). Uracil is bound by residues isoleucine 193 and 198–200 (GDA). 5-phospho-alpha-D-ribose 1-diphosphate is bound at residue aspartate 199.

This sequence belongs to the UPRTase family. The cofactor is Mg(2+).

The catalysed reaction is UMP + diphosphate = 5-phospho-alpha-D-ribose 1-diphosphate + uracil. The protein operates within pyrimidine metabolism; UMP biosynthesis via salvage pathway; UMP from uracil: step 1/1. With respect to regulation, allosterically activated by GTP. Catalyzes the conversion of uracil and 5-phospho-alpha-D-ribose 1-diphosphate (PRPP) to UMP and diphosphate. In Campylobacter jejuni subsp. jejuni serotype O:2 (strain ATCC 700819 / NCTC 11168), this protein is Uracil phosphoribosyltransferase.